A 268-amino-acid chain; its full sequence is Shikimate dehydrogenase (NADP(+)) (268 aa).

Residues 14-16 (SKS) and threonine 61 each bind shikimate. The active-site Proton acceptor is the lysine 65. Shikimate-binding residues include asparagine 86 and aspartate 102. NADP(+) is bound by residues 126-130 (GAGGA), 149-154 (NRTFLK), and methionine 213. Shikimate is bound at residue tyrosine 215. Glycine 238 serves as a coordination point for NADP(+).

The protein belongs to the shikimate dehydrogenase family. In terms of assembly, homodimer.

The enzyme catalyses shikimate + NADP(+) = 3-dehydroshikimate + NADPH + H(+). Its pathway is metabolic intermediate biosynthesis; chorismate biosynthesis; chorismate from D-erythrose 4-phosphate and phosphoenolpyruvate: step 4/7. In terms of biological role, involved in the biosynthesis of the chorismate, which leads to the biosynthesis of aromatic amino acids. Catalyzes the reversible NADPH linked reduction of 3-dehydroshikimate (DHSA) to yield shikimate (SA). In Haemophilus influenzae (strain PittGG), this protein is Shikimate dehydrogenase (NADP(+)).